The chain runs to 212 residues: Uracil phosphoribosyltransferase (212 aa).

5-phospho-alpha-D-ribose 1-diphosphate-binding positions include Arg78, Arg103, and 130-138; that span reads DPMLATGGS. Uracil contacts are provided by residues Ile193 and 198-200; that span reads GDA. Position 199 (Asp199) interacts with 5-phospho-alpha-D-ribose 1-diphosphate.

This sequence belongs to the UPRTase family. It depends on Mg(2+) as a cofactor.

The catalysed reaction is UMP + diphosphate = 5-phospho-alpha-D-ribose 1-diphosphate + uracil. Its pathway is pyrimidine metabolism; UMP biosynthesis via salvage pathway; UMP from uracil: step 1/1. Allosterically activated by GTP. Its function is as follows. Catalyzes the conversion of uracil and 5-phospho-alpha-D-ribose 1-diphosphate (PRPP) to UMP and diphosphate. This is Uracil phosphoribosyltransferase from Ectopseudomonas mendocina (strain ymp) (Pseudomonas mendocina).